A 763-amino-acid polypeptide reads, in one-letter code: Phosphoglycerol transferase I (763 aa).

Helical transmembrane passes span 1–21 (MSEL…AWKA), 26–46 (WWFA…ITLY), 77–97 (ILPG…LGWV), and 108–128 (FGYS…SPAF).

This sequence belongs to the OpgB family.

It localises to the cell inner membrane. It catalyses the reaction a phosphatidylglycerol + a membrane-derived-oligosaccharide D-glucose = a 1,2-diacyl-sn-glycerol + a membrane-derived-oligosaccharide 6-(glycerophospho)-D-glucose.. It functions in the pathway glycan metabolism; osmoregulated periplasmic glucan (OPG) biosynthesis. In terms of biological role, transfers a phosphoglycerol residue from phosphatidylglycerol to the membrane-bound nascent glucan backbones. This Citrobacter koseri (strain ATCC BAA-895 / CDC 4225-83 / SGSC4696) protein is Phosphoglycerol transferase I.